The chain runs to 188 residues: MTIMSDKWIKDAVIKQSMIRPFAEKQVRVHNKEKIISYGLSSYGYDARVSNEFKIFTNINSTTVDPKNFSEDNLVDREVDECIIPPNSFALGRTIEYFKIPRDVLVICVGKSTYARCGIIVNVTPLEPEWEGHVTLEFSNTTPLPAKIYANEGACQFLFLKSDQICDTSYAERQGKYMKQVGVTLPLT.

DCTP contacts are provided by residues 111-116 (KSTYAR), 135-137 (TLE), Gln156, Tyr170, Lys179, and Gln180. The Proton donor/acceptor role is filled by Glu137.

It belongs to the dCTP deaminase family. Homotrimer.

It catalyses the reaction dCTP + H2O + H(+) = dUTP + NH4(+). It functions in the pathway pyrimidine metabolism; dUMP biosynthesis; dUMP from dCTP (dUTP route): step 1/2. Functionally, catalyzes the deamination of dCTP to dUTP. The chain is dCTP deaminase from Rickettsia typhi (strain ATCC VR-144 / Wilmington).